The primary structure comprises 483 residues: Glucose-1-phosphate adenylyltransferase large subunit 3, chloroplastic/amyloplastic (483 aa).

It belongs to the bacterial/plant glucose-1-phosphate adenylyltransferase family. As to quaternary structure, heterotetramer. In terms of tissue distribution, tubers.

It localises to the plastid. The protein localises to the chloroplast. Its subcellular location is the amyloplast. It catalyses the reaction alpha-D-glucose 1-phosphate + ATP + H(+) = ADP-alpha-D-glucose + diphosphate. The protein operates within glycan biosynthesis; starch biosynthesis. With respect to regulation, activated by 3'phosphoglycerate, inhibited by orthophosphate. Allosteric regulation. Functionally, this protein plays a role in synthesis of starch. It catalyzes the synthesis of the activated glycosyl donor, ADP-glucose from Glc-1-P and ATP. The chain is Glucose-1-phosphate adenylyltransferase large subunit 3, chloroplastic/amyloplastic (AGPS3) from Solanum tuberosum (Potato).